The chain runs to 412 residues: Probable inactive allantoicase (412 aa).

This sequence belongs to the allantoicase family.

The function of this enzyme is unclear as allantoicase activity is not known to exist in mammals. This Bos taurus (Bovine) protein is Probable inactive allantoicase (ALLC).